The following is a 1259-amino-acid chain: Receptor tyrosine-protein kinase erbB-2 (1259 aa).

A signal peptide spans 1–22; it reads MELAAWCRWGLLLALLPSGAAG. The Extracellular segment spans residues 23–653; that stretch reads TQVCTGTDMK…EQRASPVTSI (631 aa). An intrachain disulfide couples C26 to C53. N-linked (GlcNAc...) asparagine glycosylation is present at N68. 13 cysteine pairs are disulfide-bonded: C162-C192, C195-C204, C199-C212, C220-C227, C224-C235, C236-C244, C240-C252, C255-C264, C268-C295, C299-C311, C315-C331, C334-C338, and C342-C367. T182 carries the post-translational modification Phosphothreonine. N-linked (GlcNAc...) asparagine glycosylation is present at N259. N421 is a glycosylation site (N-linked (GlcNAc...) asparagine). Intrachain disulfides connect C475–C504, C511–C519, and C514–C527. N-linked (GlcNAc...) asparagine glycosylation is present at N529. 8 cysteine pairs are disulfide-bonded: C530–C539, C543–C559, C562–C575, C566–C583, C586–C595, C599–C622, C625–C633, and C629–C641. N-linked (GlcNAc...) asparagine glycosylation is present at N570. A glycan (N-linked (GlcNAc...) asparagine) is linked at N628. Residues 654–674 form a helical membrane-spanning segment; sequence IAAVVGILLAVVVGLVLGILI. Positions 675-688 are required for interaction with KPNB1 and EEA1; that stretch reads KRRRQKIRKYTMRR. The short motif at 675–688 is the Nuclear localization signal element; it reads KRRRQKIRKYTMRR. At 675–1259 the chain is on the cytoplasmic side; that stretch reads KRRRQKIRKY…PEYLGLDVPV (585 aa). The Protein kinase domain occupies 719-986; that stretch reads LRKVKVLGSG…RMARDPQRFV (268 aa). Residues 725 to 733 and K752 contribute to the ATP site; that span reads LGSGAFGTV. D844 (proton acceptor) is an active-site residue. Y876 carries the phosphotyrosine modification. The segment at 1027–1183 is disordered; it reads QGFFCPEPTP…PKTLSPGKNG (157 aa). Phosphoserine occurs at positions 1077, 1082, and 1106. The residue at position 1111 (Y1111) is a Phosphotyrosine. Phosphotyrosine; by autocatalysis is present on Y1138. Pro residues predominate over residues 1145–1160; sequence WPQPPLALEGPLPPSR. T1165 is subject to Phosphothreonine. Residues 1199–1201 form an interaction with PIK3C2B region; sequence EYL. Y1200 bears the Phosphotyrosine mark. The tract at residues 1203-1259 is disordered; that stretch reads PRGRAAPQPHPPPAFSPAFDNLYYWDQDPSERGSPPSTFEGTPTAENPEYLGLDVPV. Over residues 1237–1247 the composition is skewed to polar residues; the sequence is PPSTFEGTPTA. A Phosphotyrosine; by autocatalysis modification is found at Y1252.

The protein belongs to the protein kinase superfamily. Tyr protein kinase family. EGF receptor subfamily. In terms of assembly, homodimer. Heterodimer with EGFR, ERBB3 and ERBB4. Part of a complex with EGFR and either PIK3C2A or PIK3C2B. May interact with PIK3C2B when phosphorylated on Tyr-1200. Interacts with PRKCABP and PLXNB1. Interacts (when phosphorylated on Tyr-1252) with MEMO1. Interacts with MUC1. Interacts (when phosphorylated on Tyr-1138) with GRB7 (via SH2 domain). Interacts (when phosphorylated on Tyr-1252) with ERBIN. Interacts with SRC, KPNB1, PTK6, RANBP2, EEA1, CRM1, CLTC, RPA194, MYOC and ACTB. Interacts (preferentially with the tyrosine phosphorylated form) with CPNE3; this interaction occurs at the cell membrane and is increased in a growth factor heregulin-dependent manner. Interacts with HSP90AA1 and HSP90AB1 in an ATP-dependent manner; the interaction suppresses ERBB2 kinase activity. Interacts with SORL1; this interaction regulates ERBB2 subcellular distribution by promoting its recycling after internalization from endosomes back to the plasma membrane, hence stimulates ERBB2-mediated signaling. Interacts with SH3BGRL. Interacts with ROR1. In terms of processing, autophosphorylated. Autophosphorylation occurs in trans, i.e. one subunit of the dimeric receptor phosphorylates tyrosine residues on the other subunit. Ligand-binding increases phosphorylation on tyrosine residues. Signaling via SEMA4C promotes phosphorylation at Tyr-1252. Dephosphorylated by PTPN12.

The protein localises to the cell membrane. It is found in the cell projection. Its subcellular location is the ruffle membrane. It localises to the early endosome. The protein resides in the cytoplasm. The protein localises to the perinuclear region. It is found in the nucleus. The enzyme catalyses L-tyrosyl-[protein] + ATP = O-phospho-L-tyrosyl-[protein] + ADP + H(+). Protein tyrosine kinase that is part of several cell surface receptor complexes, but that apparently needs a coreceptor for ligand binding. Essential component of a neuregulin-receptor complex, although neuregulins do not interact with it alone. GP30 is a potential ligand for this receptor. Regulates outgrowth and stabilization of peripheral microtubules (MTs). Upon ERBB2 activation, the MEMO1-RHOA-DIAPH1 signaling pathway elicits the phosphorylation and thus the inhibition of GSK3B at cell membrane. This prevents the phosphorylation of APC and CLASP2, allowing its association with the cell membrane. In turn, membrane-bound APC allows the localization of MACF1 to the cell membrane, which is required for microtubule capture and stabilization. Functionally, in the nucleus is involved in transcriptional regulation. Associates with the 5'-TCAAATTC-3' sequence in the PTGS2/COX-2 promoter and activates its transcription. Implicated in transcriptional activation of CDKN1A; the function involves STAT3 and SRC. Involved in the transcription of rRNA genes by RNA Pol I and enhances protein synthesis and cell growth. The sequence is that of Receptor tyrosine-protein kinase erbB-2 (ERBB2) from Canis lupus familiaris (Dog).